The chain runs to 291 residues: MSRHLETSLNNKEFVLNSLEKGLRLDGRQLSDFRSLEIQFGKEYGQVDVSFGHTRVMARITTEITKPYTDRPFDGIFSITTELTPLAYSAFEAGRVSDQEIVISRLIEKAVRRSNALDTESLCIISGQKCWHVRASVHFINHDGNLVDAACIAVIAALCHFRRPELTVVGEEVTVHPVEERVPVPLSILHMPICVTFSFFNNGELAIVDATLEEEDLCNGSMTITLNKNREVCQIYKAGGIIIDPSKIISCAKTAFDIAVSVCSVIQQALDEDLRKKETQYLGGSAENERS.

Belongs to the RNase PH family. In terms of assembly, component of the RNA exosome complex. Specifically part of the catalytically inactive RNA exosome core complex (Exo-9) which may associate with the catalytic subunits rrp6 and dis3 in cytoplasmic- and nuclear-specific RNA exosome complex forms. Exo-9 is formed by a hexameric base ring of RNase PH domain-containing subunits and a cap ring consisting of csl4, rrp4 and rrp40.

Its subcellular location is the cytoplasm. It localises to the nucleus. It is found in the nucleolus. Its function is as follows. Non-catalytic component of the RNA exosome complex which has 3'-&gt;5' exoribonuclease activity and participates in a multitude of cellular RNA processing and degradation events. In the nucleus, the RNA exosome complex is involved in proper maturation of stable RNA species such as rRNA, snRNA and snoRNA, in the elimination of RNA processing by-products and non-coding 'pervasive' transcripts, such as antisense RNA species and cryptic unstable transcripts (CUTs), and of mRNAs with processing defects, thereby limiting or excluding their export to the cytoplasm. In the cytoplasm, the RNA exosome complex is involved in general mRNA turnover and in RNA surveillance pathways, preventing translation of aberrant mRNAs. The catalytic inactive RNA exosome core complex of 9 subunits (Exo-9) is proposed to play a pivotal role in the binding and presentation of RNA for ribonucleolysis, and to serve as a scaffold for the association with catalytic subunits and accessory proteins or complexes. ski6 is part of the hexameric ring of RNase PH domain-containing subunits proposed to form a central channel which threads RNA substrates for degradation. The sequence is that of Exosome complex component rrp45 (rrp45) from Schizosaccharomyces pombe (strain 972 / ATCC 24843) (Fission yeast).